The sequence spans 639 residues: MSESVKENVTPTRNFRRTQGPQNNTKPHNDRKNFRRKQKKNNLSAEPNLTTSSADDTDEENELCVICARKLTYVSLTPCHHKTCHICGFRQRALYNKKSCLICRTENEEVMFTDRIDGDISDKYNFCEKNEKYGINFTSEEVATETLNLLKFFCPLSKDEQVCDFGSFKKYNEHLKSEHNRMICLICATHKHAFPCELEIFTQNQLRNHQTKGNSEGFKGHPMCAFCSGKRFYSDDELYIHMRNQHEKCHICDKMNPASPQYFKDYNQLFDHFKHSHYVCTVQTCLDNKFVVFKDELELQAHILQEHGNILKGKPKFFQSELSTFISAPSRVIRERDDYDLPSISSLPGSSSGSRTDVRSASSPEESRLRLAERAKYYLENSKEDFNKFSSYNEDYSKGRLSAEKLLESYKLLFTKPNADVYLLIHNLAETFPKNSSKYNNLNAIYEQREQTLARQTSLPSLSSDSSLSMSIGRGHWGGTNDGGSAGAALGVRNIKNLPTLKSPSASYDPFATTVKKNTLRPVQNIKRTTPQSVSYRTSTNTVAFSPTYLESKKGSSSTSLNNSKDKLKSLNLPQLPPPKPKVQIPGLNRPQIADPKQWGKKSSTQDTNVHDNLRELNTTSGGNKKKGKQKQLLFHIGV.

A disordered region spans residues 1–55; sequence MSESVKENVTPTRNFRRTQGPQNNTKPHNDRKNFRRKQKKNNLSAEPNLTTSSAD. S2 is subject to N-acetylserine. Composition is skewed to polar residues over residues 7 to 26 and 43 to 54; these read ENVT…NNTK and LSAEPNLTTSSA. T57 is subject to Phosphothreonine. An RING-type zinc finger spans residues 64 to 104; it reads CVICARKLTYVSLTPCHHKTCHICGFRQRALYNKKSCLICR. Residues 222–292 enclose the LIM zinc-binding domain; that stretch reads PMCAFCSGKR…QTCLDNKFVV (71 aa). Positions 343 to 354 are enriched in low complexity; sequence SISSLPGSSSGS. Disordered regions lie at residues 343 to 367 and 550 to 631; these read SISS…PEES and LESK…GKQK. S354 carries the post-translational modification Phosphoserine.

Belongs to the ZNF598/HEL2 family. In terms of assembly, interacts with the E2 ubiquitin-conjugating enzyme UBC4. Interacts with histones H3 and H4.

Its subcellular location is the cytoplasm. The catalysed reaction is S-ubiquitinyl-[E2 ubiquitin-conjugating enzyme]-L-cysteine + [acceptor protein]-L-lysine = [E2 ubiquitin-conjugating enzyme]-L-cysteine + N(6)-ubiquitinyl-[acceptor protein]-L-lysine.. The protein operates within protein modification; protein ubiquitination. In terms of biological role, E3 ubiquitin-protein ligase that plays a key role in the ribosome quality control (RQC), a pathway that takes place when a ribosome has stalled during translation, leading to degradation of nascent peptide chains. HEL2 is activated when ribosomes are stalled within an mRNA following translation of prematurely polyadenylated mRNAs. Acts as a ribosome collision sensor: specifically recognizes and binds collided ribosome and ubiquitinates the 40S ribosomal proteins RPS20/uS10 and RPS3/uS3. Catalyzes 'Lys-63'-linked polyubiquitination of RPS20/uS10, promoting recruitment of the RQT (ribosome quality control trigger) complex, which drives the disassembly of stalled ribosomes, followed by degradation of nascent peptides. HEL2 also acts as an activator of the No-Go decay (NGD) pathway by mediating polyubiquitination of monoubiquitinated RPS3/uS3 and RPS7/es7: RPS3/uS3 and RPS7/es7 are first monoubiquitinated by MAG2 and MOT2/NOT4, respectively, and HEL2 mediates formation of 'Lys-63'-linked polyubiquitin chains on monoubiquitin, leading to activation of the NGD pathway in a CUE2-mediated endonucleolytic cleavage. Polyubiquitination of RPS3/uS3 also triggers degradation of non-functional 18S rRNA. The RQC pathway and the integrated stress response (ISR) antagonize each other: HEL2 prevents the activation of GCN2, while GCN2 suppresses RQC activation. The RQC pathway functions as a preventive quality control in the secretory pathway: HEL2 binds preferentially to the pre-engaged secretory ribosome-nascent chain complexes and prevents mistargeting of secretory proteins into mitochondria. Independently of its role in RQC, also involved in the polyubiquitination and proteasomal-degradation of excess histone proteins. In Saccharomyces cerevisiae (strain ATCC 204508 / S288c) (Baker's yeast), this protein is E3 ubiquitin-protein ligase HEL2.